We begin with the raw amino-acid sequence, 465 residues long: Probable glycine dehydrogenase (decarboxylating) subunit 1 (465 aa).

This sequence belongs to the GcvP family. N-terminal subunit subfamily. The glycine cleavage system is composed of four proteins: P, T, L and H. In this organism, the P 'protein' is a heterodimer of two subunits.

The catalysed reaction is N(6)-[(R)-lipoyl]-L-lysyl-[glycine-cleavage complex H protein] + glycine + H(+) = N(6)-[(R)-S(8)-aminomethyldihydrolipoyl]-L-lysyl-[glycine-cleavage complex H protein] + CO2. Its function is as follows. The glycine cleavage system catalyzes the degradation of glycine. The P protein binds the alpha-amino group of glycine through its pyridoxal phosphate cofactor; CO(2) is released and the remaining methylamine moiety is then transferred to the lipoamide cofactor of the H protein. In Aeropyrum pernix (strain ATCC 700893 / DSM 11879 / JCM 9820 / NBRC 100138 / K1), this protein is Probable glycine dehydrogenase (decarboxylating) subunit 1.